Here is a 153-residue protein sequence, read N- to C-terminus: Neuromedin-S (153 aa).

Positions 1-26 (MKHPLPHYSPILFIYCFCMLQIPSSG) are cleaved as a signal peptide. 3 consecutive propeptides follow at residues 27 to 69 (ASPP…VYKR), 70 to 105 (FLFH…ASRR), and 106 to 108 (MKR). Asparagine amide is present on asparagine 144. Residues 147–153 (YTDNNFQ) constitute a propeptide that is removed on maturation.

Belongs to the NmU family.

It is found in the secreted. In terms of biological role, implicated in the regulation of circadian rhythms through autocrine and/or paracrine actions. This is Neuromedin-S (Nms) from Mus musculus (Mouse).